Here is a 360-residue protein sequence, read N- to C-terminus: Nicotinate-nucleotide--dimethylbenzimidazole phosphoribosyltransferase (360 aa).

Catalysis depends on glutamate 327, which acts as the Proton acceptor.

The protein belongs to the CobT family.

It carries out the reaction 5,6-dimethylbenzimidazole + nicotinate beta-D-ribonucleotide = alpha-ribazole 5'-phosphate + nicotinate + H(+). Its pathway is nucleoside biosynthesis; alpha-ribazole biosynthesis; alpha-ribazole from 5,6-dimethylbenzimidazole: step 1/2. Catalyzes the synthesis of alpha-ribazole-5'-phosphate from nicotinate mononucleotide (NAMN) and 5,6-dimethylbenzimidazole (DMB). The sequence is that of Nicotinate-nucleotide--dimethylbenzimidazole phosphoribosyltransferase from Shewanella baltica (strain OS185).